A 265-amino-acid polypeptide reads, in one-letter code: H-2 class II histocompatibility antigen, A-D beta chain (265 aa).

The signal sequence occupies residues 1–27; it reads MALQIPSLLLSAAVVVLMVLSSPRTEG. Positions 28 to 122 are beta-1; that stretch reads GNSERHFVVQ…PETSTSLRRL (95 aa). Residues 28–226 lie on the Extracellular side of the membrane; it reads GNSERHFVVQ…RAQSESARSK (199 aa). Disulfide bonds link C42–C106 and C145–C201. An N-linked (GlcNAc...) asparagine glycan is attached at N46. The tract at residues 123–216 is beta-2; sequence EQPNVAISLS…SLKSPITVEW (94 aa). The Ig-like C1-type domain occupies 125 to 213; sequence PNVAISLSRT…EHPSLKSPIT (89 aa). A connecting peptide region spans residues 217-226; that stretch reads RAQSESARSK. Residues 227–247 traverse the membrane as a helical segment; that stretch reads MLSGIGGCVLGVIFLGLGLFI. The Cytoplasmic portion of the chain corresponds to 248–265; the sequence is RHRSQKGPRGPPPAGLLQ.

The protein belongs to the MHC class II family. Ubiquitinated in immature dendritic cells leading to down-regulation of MHC class II.

Its subcellular location is the membrane. This is H-2 class II histocompatibility antigen, A-D beta chain (H2-Ab1) from Mus musculus (Mouse).